The following is a 568-amino-acid chain: Peroxisomal leader peptide-processing protease (568 aa).

A serine protease region spans residues 332–568 (TPRGLPLRDL…PLSEVPRSKL (237 aa)). Residues His-374, Asp-410, and Ser-483 each act as charge relay system in the active site.

It belongs to the peptidase S1B family. Homodimer. Forms a heterodimer with the C-terminal cleavage product (49 kDa form). Forms a heterodimer with the N-terminal cleavage product (10 kDa form). Interacts with PEX5. Interacts with LONP2. Self-cleavage gives rise to an N-terminal 10-kDa fragment and C-terminal 49-kDa fragment upon import into the peroxisomes. The full-lengh TYSND1 is the active the proteolytic processing of PTS1- and PTS2-proteins and in self-cleavage, and intermolecular self-cleavage of TYSND1 down-regulates its protease activity.

The protein resides in the peroxisome. Its activity is regulated as follows. Inhibited by N-ethylmaleimide (NEM). Not affected by leupeptin or trans-epoxysuccinyl-l-leucylamido-(4-gianidino) butane (E64). Functionally, peroxisomal protease that mediates both the removal of the leader peptide from proteins containing a PTS2 target sequence and processes several PTS1-containing proteins. Catalyzes the processing of PTS1-proteins involved in the peroxisomal beta-oxidation of fatty acids. The sequence is that of Peroxisomal leader peptide-processing protease (Tysnd1) from Mus musculus (Mouse).